Here is a 479-residue protein sequence, read N- to C-terminus: Proline--tRNA ligase 2 (479 aa).

It belongs to the class-II aminoacyl-tRNA synthetase family. ProS type 3 subfamily. As to quaternary structure, homodimer.

The protein localises to the cytoplasm. It carries out the reaction tRNA(Pro) + L-proline + ATP = L-prolyl-tRNA(Pro) + AMP + diphosphate. Its function is as follows. Catalyzes the attachment of proline to tRNA(Pro) in a two-step reaction: proline is first activated by ATP to form Pro-AMP and then transferred to the acceptor end of tRNA(Pro). The chain is Proline--tRNA ligase 2 from Rhodococcus jostii (strain RHA1).